Consider the following 385-residue polypeptide: 6-hydroxynicotinate 3-monooxygenase (385 aa).

A signal peptide spans 1-20 (MSQSPRIAVVGAGLGGAAAA). FAD contacts are provided by residues glycine 15, 34-35 (EQ), histidine 47, arginine 108, and leucine 130. Histidine 47 acts as the Proton acceptor in catalysis. Tyrosine 215 functions as the Proton acceptor in the catalytic mechanism. Residues aspartate 294 and 307–308 (AA) each bind FAD.

Belongs to the 6-hydroxynicotinate 3-monooxygenase family. Monomer. Requires FAD as cofactor.

It catalyses the reaction 6-hydroxynicotinate + NADH + O2 + 2 H(+) = 2,5-dihydroxypyridine + CO2 + NAD(+) + H2O. With respect to regulation, inhibited competitively by nicotinic acid with a Ki of 0.49 mM. Inhibited by thiol-specific compounds p-chloromercuribenzoate, DTNB, Ag(2)SO(4), HgCl(2), CuCl(2) and N-ethylmaleimide. No inhibition by o-phenanthroline, 8-hydroxyquinoline, EDTA, disodium 4,5-dihydroxy-m-benzenedisulfonate, fluoride, azide, KCl, LiCl, NaCl, BaCl(2), MnCl(2), MgCl(2), PBCl, ZnCl(2), CoCl(2), SnCl(2), FeSO(4), FeCl(3), NiCl(2), CdCl(2), AlCl(3), iodoacetic acid, hydro-xylamine, phenylhydrazine, semicarbazide, cysteamine, alpha,alpha-dipyridyl and urea. Flavin-dependent monooxygenase (FMO) that catalyzes the decarboxylative hydroxylation of 6-hydroxynicotinic acid (6-HNA) to 2,5-dihydroxypyridine (2,5-DHP) with concomitant oxidation of NADH, a step in the aerobic nicotinate degradation pathway. Uses NADH in preference to NADPH as an electron donor. The polypeptide is 6-hydroxynicotinate 3-monooxygenase (nicC) (Pseudomonas fluorescens).